A 571-amino-acid polypeptide reads, in one-letter code: Septation ring formation regulator EzrA (571 aa).

The Extracellular portion of the chain corresponds to 1 to 3; that stretch reads MYY. Residues 4–22 traverse the membrane as a helical segment; that stretch reads MLIGFIIVVIAVIGAGYIL. Over 23 to 571 the chain is Cytoplasmic; it reads KRKHYQRINE…ASKVSVDDIE (549 aa). 5 coiled-coil regions span residues 102–147, 248–298, 326–374, 400–437, and 478–529; these read ATNA…TKEK, LAQM…DTLE, DALA…ASGE, KFAE…ERER, and RIAE…ENHF.

This sequence belongs to the EzrA family.

The protein resides in the cell membrane. Its function is as follows. Negative regulator of FtsZ ring formation; modulates the frequency and position of FtsZ ring formation. Inhibits FtsZ ring formation at polar sites. Interacts either with FtsZ or with one of its binding partners to promote depolymerization. In Listeria monocytogenes serotype 4a (strain HCC23), this protein is Septation ring formation regulator EzrA.